A 928-amino-acid polypeptide reads, in one-letter code: Protein ARABIDILLO 2 (928 aa).

Residues 3-8 carry the Nuclear localization signal motif; sequence RRVRQR. An F-box domain is found at 37 to 83; it reads YVNWTSLPYDTVFHLFTRLNYRDRASLASTCRTWRSLGASSFLWSSL. ARM repeat units lie at residues 147 to 186, 237 to 278, 303 to 341, 370 to 409, 419 to 458, 460 to 499, 501 to 543, 545 to 585, 591 to 630, 632 to 674, 676 to 715, 717 to 757, and 824 to 864; these read AARHEALESLQLGPDFCERITSDAIRVIAFCCPKLKKLRV, TSNI…KSSQ, KGKVLLAVFTDTFDELASIFADNSKKPKNIFSYWRDLIR, SQGLNDFWLNQGATLLLSLMQSAQEDVQERAATGLATFIV, CGRAEAVMRDGGIRLLLELAKSWREGLQSEAAKAIANLSV, AKVAKAVAEEGGISVLADLAKSMNRLVAEEAAGGLWNLSV, EEHK…NLAA, DKCS…NLAA, GNNAAVGQEAGALEALVQLTQSPHEGVKQEAAGALWNLAF, DKNR…GLSV, EANSIAIGHEGGIPPLIALVRSEAEDVHETAAGALWNLSF, PGNA…YMFD, and IPEA…QFTI.

It belongs to the beta-catenin family. Expressed ubiquitously.

The protein resides in the nucleus. Promotes lateral root initiation and development, independently of auxin (IAA) and abscisis acid (ABA). This is Protein ARABIDILLO 2 from Arabidopsis thaliana (Mouse-ear cress).